Consider the following 196-residue polypeptide: dCTP deaminase (196 aa).

Residues 113–118 (RSSLAR), aspartate 131, 139–141 (VLE), tyrosine 174, lysine 181, and glutamine 185 contribute to the dCTP site. Glutamate 141 acts as the Proton donor/acceptor in catalysis.

This sequence belongs to the dCTP deaminase family. Homotrimer.

The enzyme catalyses dCTP + H2O + H(+) = dUTP + NH4(+). Its pathway is pyrimidine metabolism; dUMP biosynthesis; dUMP from dCTP (dUTP route): step 1/2. Functionally, catalyzes the deamination of dCTP to dUTP. This chain is dCTP deaminase, found in Wigglesworthia glossinidia brevipalpis.